The chain runs to 380 residues: Putative 8-amino-7-oxononanoate synthase (380 aa).

Arg-18 is a binding site for substrate. 106–107 (GY) lines the pyridoxal 5'-phosphate pocket. Substrate is bound at residue His-131. Pyridoxal 5'-phosphate contacts are provided by residues Ser-179, 205 to 208 (DEAH), and 236 to 239 (TFGK). Residue Lys-239 is modified to N6-(pyridoxal phosphate)lysine. Thr-352 serves as a coordination point for substrate.

This sequence belongs to the class-II pyridoxal-phosphate-dependent aminotransferase family. BioF subfamily. As to quaternary structure, homodimer. Requires pyridoxal 5'-phosphate as cofactor.

It carries out the reaction 6-carboxyhexanoyl-[ACP] + L-alanine + H(+) = (8S)-8-amino-7-oxononanoate + holo-[ACP] + CO2. The protein operates within cofactor biosynthesis; biotin biosynthesis. Catalyzes the decarboxylative condensation of pimeloyl-[acyl-carrier protein] and L-alanine to produce 8-amino-7-oxononanoate (AON), [acyl-carrier protein], and carbon dioxide. This Neisseria gonorrhoeae (strain ATCC 700825 / FA 1090) protein is Putative 8-amino-7-oxononanoate synthase (bioF).